The primary structure comprises 150 residues: CCAAT/enhancer-binding protein gamma (150 aa).

Lys-3 participates in a covalent cross-link: Glycyl lysine isopeptide (Lys-Gly) (interchain with G-Cter in SUMO2). The tract at residues Gly-27–Val-94 is disordered. Residues Leu-28 to Ala-37 are compositionally biased toward low complexity. Residues Ser-56–Asn-72 show a composition bias toward basic and acidic residues. Residues Ser-62–His-125 enclose the bZIP domain. Positions Arg-66–Arg-93 are basic motif. The segment at Leu-97–Leu-118 is leucine-zipper. The interval Leu-129–Gln-150 is disordered. Positions Gln-134–Gln-150 are enriched in polar residues.

It belongs to the bZIP family. C/EBP subfamily. In terms of assembly, binds DNA as a dimer and can form stable heterodimers with CEBPA. Can form stable heterodimers with CEBPB. Interacts with ZNF638; this interaction increases transcriptional activation. In terms of tissue distribution, ubiquitous.

It localises to the nucleus. In terms of biological role, transcription factor that binds to the promoter and the enhancer regions of target genes. Binds to the promoter and the enhancer of the immunoglobulin heavy chain. Binds to GPE1, a cis-acting element in the G-CSF gene promoter. Binds to the enhancer element PRE-I (positive regulatory element-I) of the IL-4 gene. Binds to the promoter and the enhancer of the alpha-1-fetoprotein gene. This chain is CCAAT/enhancer-binding protein gamma (Cebpg), found in Mus musculus (Mouse).